The following is a 214-amino-acid chain: MVRGGIRDTWRLKKWFKVVAPPLFGETVLGTTPADDPDKLIGRVMETTLFDITGDYSYVHVKMYFQVVRVEGDTAYTRFKGHELLRDYIRGLTRRKSSKVTGIFNVWTKDGYGLRVTAMAFTRQRCKTSQKSAIRKVMQEIVEQKARESTLDELIQLMVFSDHEGSLAYLIDESARKIYPLRKVEIAKSKLLWVPGPNGPEKAVVVSPLQLKVT.

The protein belongs to the eukaryotic ribosomal protein eS1 family.

This Aeropyrum pernix (strain ATCC 700893 / DSM 11879 / JCM 9820 / NBRC 100138 / K1) protein is Small ribosomal subunit protein eS1.